Reading from the N-terminus, the 574-residue chain is Polyamine aminopropyltransferase (574 aa).

7 consecutive transmembrane segments (helical) span residues 22 to 42 (VLLLGIMAVLAGCGLIYEYLL), 55 to 75 (AAIYTMIGLMIVSMGLGAFAA), 90 to 110 (LTVALCGSLAILITAAVIGFG), 144 to 164 (LPYFWGVLLGLMIGMEIPLIA), 188 to 208 (IGAGIGAAIWVGFMLAIDIQL), 209 to 229 (AAALTASFNLLAGFVFIWRFW), and 237 to 257 (LLLAAHLVVTGVLLLLAIQGP). The segment at 254–510 (IQGPSWEQQF…ATLDGKDAQH (257 aa)) is spermidine synthase. A PABS domain is found at 257–505 (PSWEQQFNNL…WGWSIATLDG (249 aa)). Gln281 contacts S-methyl-5'-thioadenosine. 2 residues coordinate spermidine: His317 and Asp341. S-methyl-5'-thioadenosine is bound by residues Asp360 and 403–404 (DA). The Proton acceptor role is filled by Asp424.

Belongs to the spermidine/spermine synthase family. In terms of assembly, homodimer or homotetramer.

The protein resides in the cell membrane. It carries out the reaction S-adenosyl 3-(methylsulfanyl)propylamine + putrescine = S-methyl-5'-thioadenosine + spermidine + H(+). The protein operates within amine and polyamine biosynthesis; spermidine biosynthesis; spermidine from putrescine: step 1/1. Functionally, catalyzes the irreversible transfer of a propylamine group from the amino donor S-adenosylmethioninamine (decarboxy-AdoMet) to putrescine (1,4-diaminobutane) to yield spermidine. The protein is Polyamine aminopropyltransferase of Shewanella oneidensis (strain ATCC 700550 / JCM 31522 / CIP 106686 / LMG 19005 / NCIMB 14063 / MR-1).